We begin with the raw amino-acid sequence, 275 residues long: Light-independent protochlorophyllide reductase iron-sulfur ATP-binding protein (275 aa).

ATP is bound by residues 12-17 (GIGKST) and Lys-41. Ser-16 contributes to the Mg(2+) binding site. [4Fe-4S] cluster-binding residues include Cys-97 and Cys-131. 182-183 (NR) contacts ATP.

This sequence belongs to the NifH/BchL/ChlL family. As to quaternary structure, homodimer. Protochlorophyllide reductase is composed of three subunits; BchL, BchN and BchB. [4Fe-4S] cluster serves as cofactor.

The catalysed reaction is chlorophyllide a + oxidized 2[4Fe-4S]-[ferredoxin] + 2 ADP + 2 phosphate = protochlorophyllide a + reduced 2[4Fe-4S]-[ferredoxin] + 2 ATP + 2 H2O. It participates in porphyrin-containing compound metabolism; bacteriochlorophyll biosynthesis (light-independent). Functionally, component of the dark-operative protochlorophyllide reductase (DPOR) that uses Mg-ATP and reduced ferredoxin to reduce ring D of protochlorophyllide (Pchlide) to form chlorophyllide a (Chlide). This reaction is light-independent. The L component serves as a unique electron donor to the NB-component of the complex, and binds Mg-ATP. In Pelodictyon phaeoclathratiforme (strain DSM 5477 / BU-1), this protein is Light-independent protochlorophyllide reductase iron-sulfur ATP-binding protein.